The following is a 368-amino-acid chain: MAKSKKIVAATSGSRSRSSRAGLAFPVGRVHRLLRKGHFADRIGSGSAVYLAAVLEYLTAEILELAGNAARDNRKTRINPRHIQLAVRNDEELSKLFTGVVIPSGGTLPHIWPALIPNEAKDSSTASASFNAPAKSATVKALAAAKSAGKKPAAVSSSSAAASSSSSASSSSSVAPKKPVRGFTILSKKTLHLGQTLYVVNGDLTEVRCDAVVHPTNGTMSFAGQVGGAIRAAAGAGVDAEVNSYMSEHSQLQVTKAAITSGHNLPSKWIVHVHSPNYSNAATATDALTQTIRNALTLADTKSIKTIAFPSIGSGNNHFPKHIAAQTILQAISAYFMSIMSSSIKEVYFVLFDQESINVYNAELINTN.

Residues 154–177 (AVSSSSAAASSSSSASSSSSVAPK) are disordered. The Macro domain occupies 184–368 (TILSKKTLHL…VYNAELINTN (185 aa)). Residues aspartate 203, leucine 204, glutamine 225, valine 226, serine 275, glycine 313, serine 314, glycine 315, asparagine 316, and asparagine 317 each contribute to the a glycoprotein site.

The protein belongs to the histone H2A family. The nucleosome is a histone octamer containing two molecules each of H2A, H2B, H3 and H4 assembled in one H3-H4 heterotetramer and two H2A-H2B heterodimers.

It is found in the nucleus. Its subcellular location is the chromosome. Its function is as follows. Variant histone H2A which replaces conventional H2A in a subset of nucleosomes where it represses transcription. Nucleosomes wrap and compact DNA into chromatin, limiting DNA accessibility to the cellular machineries which require DNA as a template. Histones thereby play a central role in transcription regulation, DNA repair, DNA replication and chromosomal stability. DNA accessibility is regulated via a complex set of post-translational modifications of histones, also called histone code, and nucleosome remodeling. In terms of biological role, specifically binds poly-ADP-ribose and plays a key role in NAD(+) metabolism. Able to bind to the ends of poly-ADP-ribose chains created by PARP1 and cap them. This prevents PARP1 from further addition of ADP-ribose and thus limits the consumption of nuclear NAD(+), allowing the cell to maintain proper NAD(+) levels in both the nucleus and the mitochondria to promote proper mitochondrial respiration. The sequence is that of Histone macroH2A1.1 from Capsaspora owczarzaki (strain ATCC 30864).